The chain runs to 294 residues: Kynurenine formamidase (294 aa).

Basic and acidic residues predominate over residues 1–14; sequence MSRWKDMNKDELER. The tract at residues 1-20 is disordered; that stretch reads MSRWKDMNKDELERQFSPSQ. Residues 84–88 carry the HGGXW motif; it reads HGGYW. Catalysis depends on serine 153, which acts as the Nucleophile. Catalysis depends on residues aspartate 236 and histidine 269.

This sequence belongs to the kynurenine formamidase family. Homodimer.

It is found in the cytoplasm. Its subcellular location is the cytosol. The protein resides in the nucleus. The enzyme catalyses N-formyl-L-kynurenine + H2O = L-kynurenine + formate + H(+). It functions in the pathway amino-acid degradation; L-tryptophan degradation via kynurenine pathway; L-kynurenine from L-tryptophan: step 2/2. Its function is as follows. Catalyzes the hydrolysis of N-formyl-L-kynurenine to L-kynurenine, the second step in the kynurenine pathway of tryptophan degradation. Kynurenine may be further oxidized to nicotinic acid, NAD(H) and NADP(H). Required for elimination of toxic metabolites. This is Kynurenine formamidase (afmid) from Salmo salar (Atlantic salmon).